The sequence spans 94 residues: Immune protein Tsi6 (94 aa).

In terms of biological role, immunity protein that plays a role in preventing early activation of toxin Tse6. The protein is Immune protein Tsi6 of Pseudomonas aeruginosa (strain ATCC 15692 / DSM 22644 / CIP 104116 / JCM 14847 / LMG 12228 / 1C / PRS 101 / PAO1).